We begin with the raw amino-acid sequence, 4687 residues long: Plectin (4687 aa).

The segment at 1-1473 (MVAGMLMPLD…SELTTLTSQY (1473 aa)) is globular 1. Residue Arg21 is modified to Phosphoserine. A Phosphotyrosine modification is found at Val26. Residues 111–158 (RRRSPHVQTMQGPLGCPPKRGPLPAEDPAREERQVYRRKEREEGAPET) are disordered. Residues 137–154 (DPAREERQVYRRKEREEG) are compositionally biased toward basic and acidic residues. The interval 181–406 (DERDRVQKKT…YVSSLYDAMP (226 aa)) is actin-binding. Calponin-homology (CH) domains follow at residues 185-288 (RVQK…LHFK) and 301-406 (MTAK…DAMP). Residues 648-722 (LQSTQRRPEL…ERARNDESQL (75 aa)) form a Spectrin 1 repeat. Ser723 is subject to Phosphoserine. 2 Spectrin repeats span residues 743–827 (KLLN…REDH) and 840–933 (LQTQ…AIVQ). Thr818 carries the phosphothreonine modification. Residues 944–1001 (RGHVPLLAVCDYKQVEVTVHKGDQCQLVGPAQPFHWKVLSSSGSEAAVPSVCFLVPPP) form the SH3 domain. Ser1050 is subject to Phosphoserine. Residues 1318-1418 (RERVTQLLER…QKFAKQYINA (101 aa)) form a Spectrin 4 repeat. Residue Ser1438 is modified to Phosphoserine. 2 coiled-coil regions span residues 1472–1692 (QYIK…ERWL) and 1724–2760 (SFAE…TSQA). The tract at residues 1474–2758 (IKFISETLRR…LAHSEEIATS (1285 aa)) is central fibrous rod domain. The tract at residues 1623–1647 (EEAEAQKRQAQEEAERLRRQVQDES) is disordered. Ser1724 is modified (phosphoserine). Lys1728 carries the N6-acetyllysine modification. 5 disordered regions span residues 1741-1764 (VTVT…ERAR), 1796-1846 (SLAQ…GTAQ), 2096-2139 (EDTM…AEEE), 2164-2188 (LRER…KRLQ), and 2218-2307 (RLRS…DAEM). 3 stretches are compositionally biased toward basic and acidic residues: residues 1801–1839 (DAEK…KQRQ), 2096–2111 (EDTM…EAAR), and 2119–2131 (EEQR…ERVQ). Residues 2173-2182 (ARQLQLAQEA) are compositionally biased toward low complexity. Positions 2218–2261 (RLRSEAEAARRAAEEAEEAREQAEREAAQSRKQVEEAERLKQSA) are enriched in basic and acidic residues. The segment covering 2262–2275 (EEQAQAQAQAQAAA) has biased composition (low complexity). Positions 2276 to 2291 (EKLRKEAEQEAARRAQ) are enriched in basic and acidic residues. Ser2634 bears the Phosphoserine mark. The residue at position 2639 (Lys2639) is an N6-acetyllysine. The disordered stretch occupies residues 2671–2710 (QEEQQRQQQQMEQEKQELVASMEEARRRQREAEEGVRRKQ). A compositionally biased stretch (basic and acidic residues) spans 2682–2710 (EQEKQELVASMEEARRRQREAEEGVRRKQ). Residues 2759–4687 (QAAATKALPN…SLGGPESAVA (1929 aa)) are globular 2. The residue at position 2777 (Ser2777) is a Phosphoserine. Residue Tyr2784 is modified to Phosphotyrosine. Plectin repeat units follow at residues 2791-2828 (QKVP…REDV), 2829-2866 (RHYL…PGTA), 2867-2904 (LILL…PELH), 2905-2942 (HKLL…RDHG), 2943-2980 (IRLL…EEMN), and 2984-3018 (ADPS…PETG). At Ser2805 the chain carries Phosphoserine. At Thr2889 the chain carries Phosphothreonine. Tyr3036 is modified (phosphotyrosine). Lys3056 and Lys3094 each carry N6-acetyllysine. 6 Plectin repeats span residues 3119–3156 (ALVP…ADEV), 3157–3194 (RQAL…PEVA), 3195–3232 (VALL…PEMH), 3233–3270 (EKLL…REQG), 3271–3308 (LRLL…KETN), and 3311–3346 (LTSP…QLTG). A Phosphotyrosine modification is found at Tyr3365. Lys3423 bears the N6-acetyllysine mark. Plectin repeat units follow at residues 3488–3525 (RTLL…ASTA), 3526–3563 (TLLL…PELH), 3564–3601 (EKLL…RDHA), 3602–3639 (IRLL…EEMN), and 3643–3677 (ADPS…PETG). Ser3583 is modified (phosphoserine). Thr3788 carries the phosphothreonine modification. Residue Tyr3793 is modified to Phosphotyrosine. Plectin repeat units follow at residues 3823–3860 (WRYL…AEVA), 3861–3898 (RLLL…PELH), 3899–3936 (DRLL…AEEA), 3937–3974 (LRLL…KDTH), and 3978–4011 (SEPS…DNSG). Thr4033 is subject to Phosphothreonine. Ser4057 is modified (phosphoserine). Plectin repeat units follow at residues 4066-4103 (QKFL…PGTA), 4104-4141 (FELL…PEFK), 4142-4179 (DKLL…KDHG), 4180-4217 (IRLL…EEMN), 4221-4255 (TDPS…PQTG), and 4268-4308 (RKTS…HQTY). The segment at 4253–4303 (QTGLCLLPLKEKKRERKTSSKSSVRKRRVVIVDPETGKEMSVYEAYRKGLI) is binding to intermediate filaments. Phosphoserine is present on residues Ser4385, Ser4387, Ser4388, Ser4389, Ser4392, Ser4393, Ser4394, and Ser4395. Position 4396 is a phosphotyrosine (Tyr4396). Phosphoserine is present on residues Ser4399 and Ser4409. Plectin repeat units follow at residues 4411–4448 (SDPT…NITG), 4449–4486 (QRLL…KIMV), 4487–4524 (DRIN…YEAG), 4525–4562 (QRFL…ARTA), and 4563–4600 (QKLR…EGTG). Thr4414 is modified (phosphothreonine). The residue at position 4542 (Thr4542) is a Phosphothreonine; by CDK1. Residues Ser4610 and Ser4616 each carry the phosphoserine modification. Positions 4614–4674 (YYSPYSVSGS…SGYGRRYASG (61 aa)) are enriched in low complexity. Residues 4614–4687 (YYSPYSVSGS…SLGGPESAVA (74 aa)) form a disordered region. Tyr4618 is modified (phosphotyrosine). A phosphoserine mark is found at Ser4619, Ser4621, and Ser4625. At Thr4626 the chain carries Phosphothreonine. A 4 X 4 AA tandem repeats of G-S-R-X region spans residues 4628–4643 (GSRTGSRTGSRAGSRR). At Ser4629 the chain carries Phosphoserine. Residues Arg4630 and Arg4643 each carry the omega-N-methylarginine modification. Residues Ser4645 and Ser4678 each carry the phosphoserine modification.

The protein belongs to the plakin or cytolinker family. As to quaternary structure, homodimer or homotetramer. Interacts (via actin-binding domain) with SYNE3. Interacts (via calponin-homology (CH) 1 domain) with VIM (via rod region). Interacts (via N-terminus) with DST isoform 2 (via N-terminus). Interacts with FER. Interacts with TOR1A. Interacts with ANK3. Identified in complexes that contain VIM, EZR, AHNAK, BFSP1, BFSP2, ANK2, PLEC, PRX and spectrin. In terms of processing, phosphorylated by CDK1; regulates dissociation from intermediate filaments during mitosis. Isoform 2 is phosphorylated on Ser-21 and Tyr-26. As to expression, widely expressed with highest expression in skeletal muscle and lowest in thymus.

The protein resides in the cytoplasm. It is found in the cytoskeleton. The protein localises to the cell junction. It localises to the hemidesmosome. Its subcellular location is the cell projection. The protein resides in the podosome. Functionally, interlinks intermediate filaments with microtubules and microfilaments and anchors intermediate filaments to desmosomes or hemidesmosomes. May be involved not only in the cross-linking and stabilization of cytoskeletal intermediate filaments network, but also in the regulation of their dynamics. The sequence is that of Plectin (Plec) from Rattus norvegicus (Rat).